A 351-amino-acid polypeptide reads, in one-letter code: Photosystem II D2 protein (351 aa).

Residues 39-59 (CAYMAIGGWLTGTTFATSWYT) traverse the membrane as a helical segment. His116 contributes to the chlorophyll a binding site. Residues 123–139 (GFMLRQFEIARLVGVRP) traverse the membrane as a helical segment. The pheophytin a site is built by Gln128 and Asn141. The helical transmembrane segment at 151–164 (LFVSVFLIYPLGQS) threads the bilayer. His196 contacts chlorophyll a. A helical membrane pass occupies residues 206–226 (GALLCAIHGATVENTLFEDGD). The a plastoquinone site is built by His213 and Phe260. Residue His213 participates in Fe cation binding. His267 contacts Fe cation. Residues 277 to 293 (GLWMSAIGVVGLALNLR) form a helical membrane-spanning segment.

Belongs to the reaction center PufL/M/PsbA/D family. PSII is composed of 1 copy each of membrane proteins PsbA, PsbB, PsbC, PsbD, PsbE, PsbF, PsbH, PsbI, PsbJ, PsbK, PsbL, PsbM, PsbT, PsbX, PsbY, PsbZ, Psb30/Ycf12, peripheral proteins PsbO, CyanoQ (PsbQ), PsbU, PsbV and a large number of cofactors. It forms dimeric complexes. It depends on The D1/D2 heterodimer binds P680, chlorophylls that are the primary electron donor of PSII, and subsequent electron acceptors. It shares a non-heme iron and each subunit binds pheophytin, quinone, additional chlorophylls, carotenoids and lipids. There is also a Cl(-1) ion associated with D1 and D2, which is required for oxygen evolution. The PSII complex binds additional chlorophylls, carotenoids and specific lipids. as a cofactor.

The protein resides in the cellular thylakoid membrane. It carries out the reaction 2 a plastoquinone + 4 hnu + 2 H2O = 2 a plastoquinol + O2. Its function is as follows. Photosystem II (PSII) is a light-driven water:plastoquinone oxidoreductase that uses light energy to abstract electrons from H(2)O, generating O(2) and a proton gradient subsequently used for ATP formation. It consists of a core antenna complex that captures photons, and an electron transfer chain that converts photonic excitation into a charge separation. The D1/D2 (PsbA/PsbD) reaction center heterodimer binds P680, the primary electron donor of PSII as well as several subsequent electron acceptors. D2 is needed for assembly of a stable PSII complex. The chain is Photosystem II D2 protein from Prochlorothrix hollandica.